The primary structure comprises 250 residues: Ribosome-inactivating protein luffin-B (250 aa).

Glu160 is an active-site residue.

Belongs to the ribosome-inactivating protein family. Type 1 RIP subfamily.

It carries out the reaction Endohydrolysis of the N-glycosidic bond at one specific adenosine on the 28S rRNA.. In Luffa aegyptiaca (Sponge gourd), this protein is Ribosome-inactivating protein luffin-B.